Here is a 445-residue protein sequence, read N- to C-terminus: Phosphoglucosamine mutase (445 aa).

S102 functions as the Phosphoserine intermediate in the catalytic mechanism. Residues S102, D241, D243, and D245 each contribute to the Mg(2+) site. S102 is subject to Phosphoserine.

It belongs to the phosphohexose mutase family. The cofactor is Mg(2+). Post-translationally, activated by phosphorylation.

It carries out the reaction alpha-D-glucosamine 1-phosphate = D-glucosamine 6-phosphate. Its function is as follows. Catalyzes the conversion of glucosamine-6-phosphate to glucosamine-1-phosphate. The protein is Phosphoglucosamine mutase of Shewanella oneidensis (strain ATCC 700550 / JCM 31522 / CIP 106686 / LMG 19005 / NCIMB 14063 / MR-1).